Consider the following 554-residue polypeptide: Hydroxylamine reductase (554 aa).

Residues Cys3, Cys6, Cys18, and Cys25 each contribute to the [2Fe-2S] cluster site. Residues His252, Glu276, Cys320, Cys408, Cys436, Cys461, Glu495, and Lys497 each coordinate hybrid [4Fe-2O-2S] cluster. Cysteine persulfide is present on Cys408.

It belongs to the HCP family. Requires [2Fe-2S] cluster as cofactor. Hybrid [4Fe-2O-2S] cluster is required as a cofactor.

It is found in the cytoplasm. It carries out the reaction A + NH4(+) + H2O = hydroxylamine + AH2 + H(+). Functionally, catalyzes the reduction of hydroxylamine to form NH(3) and H(2)O. The polypeptide is Hydroxylamine reductase (Shewanella putrefaciens (strain CN-32 / ATCC BAA-453)).